Reading from the N-terminus, the 316-residue chain is Pantothenate kinase (316 aa).

95 to 102 is a binding site for ATP; that stretch reads GSVAVGKS.

Belongs to the prokaryotic pantothenate kinase family.

The protein resides in the cytoplasm. The catalysed reaction is (R)-pantothenate + ATP = (R)-4'-phosphopantothenate + ADP + H(+). The protein operates within cofactor biosynthesis; coenzyme A biosynthesis; CoA from (R)-pantothenate: step 1/5. The protein is Pantothenate kinase of Sodalis glossinidius (strain morsitans).